A 518-amino-acid chain; its full sequence is Glutamate--cysteine ligase (518 aa).

It belongs to the glutamate--cysteine ligase type 1 family. Type 1 subfamily.

The enzyme catalyses L-cysteine + L-glutamate + ATP = gamma-L-glutamyl-L-cysteine + ADP + phosphate + H(+). It participates in sulfur metabolism; glutathione biosynthesis; glutathione from L-cysteine and L-glutamate: step 1/2. The protein is Glutamate--cysteine ligase of Klebsiella pneumoniae subsp. pneumoniae (strain ATCC 700721 / MGH 78578).